Reading from the N-terminus, the 318-residue chain is NADH-ubiquinone oxidoreductase chain 1 (318 aa).

Helical transmembrane passes span 2–22 (PMAN…FLML), 68–88 (ITLY…LWTP), 100–120 (LGLL…LWSG), 146–166 (LAII…STLI), 171–191 (HLWL…STLA), 231–251 (IIMM…DALS), 253–273 (ELYT…FLWI), and 294–314 (LPLT…ISSI).

The protein belongs to the complex I subunit 1 family. Core subunit of respiratory chain NADH dehydrogenase (Complex I) which is composed of 45 different subunits.

It localises to the mitochondrion inner membrane. The enzyme catalyses a ubiquinone + NADH + 5 H(+)(in) = a ubiquinol + NAD(+) + 4 H(+)(out). Core subunit of the mitochondrial membrane respiratory chain NADH dehydrogenase (Complex I) which catalyzes electron transfer from NADH through the respiratory chain, using ubiquinone as an electron acceptor. Essential for the catalytic activity and assembly of complex I. This Homo sapiens (Human) protein is NADH-ubiquinone oxidoreductase chain 1 (MT-ND1).